Consider the following 312-residue polypeptide: Deoxycytidylate deaminase (312 aa).

A CMP/dCMP-type deaminase domain is found at 162-291 (SWDSYFMKLA…RMDEESFKVL (130 aa)). H233 contacts Zn(2+). The Proton donor role is filled by E235. Zn(2+) is bound by residues C260 and C263.

The protein belongs to the cytidine and deoxycytidylate deaminase family. Zn(2+) is required as a cofactor.

It catalyses the reaction dCMP + H2O + H(+) = dUMP + NH4(+). With respect to regulation, allosteric enzyme whose activity is greatly influenced by the end products of its metabolic pathway, dCTP and dTTP. In terms of biological role, catalyzes the hydrolytic deamination of dCMP to yield dUMP, the nucleotide substrate for thymidylate synthetase. This chain is Deoxycytidylate deaminase, found in Saccharomyces cerevisiae (strain ATCC 204508 / S288c) (Baker's yeast).